The following is a 379-amino-acid chain: Inositol 3-kinase (379 aa).

ATP-binding positions include Ser217, 267-270 (GAGD), and Asn294. The active-site Proton acceptor is the Asp270.

Belongs to the carbohydrate kinase pfkB family.

It carries out the reaction myo-inositol + ATP = 1D-myo-inositol 3-phosphate + ADP + H(+). Kinase that phosphorylates myo-inositol to produce multiple myo-inositol monophosphates, Ins(1)P, Ins(3)P, Ins(4)P, Ins(5)P and Ins(6)P. Participates in phytic acid biosynthesis in developing seeds. Phytic acid is the primary storage form of phosphorus in cereal grains and other plant seeds. This is Inositol 3-kinase from Zea mays (Maize).